A 176-amino-acid chain; its full sequence is 3-hydroxydecanoyl-[acyl-carrier-protein] dehydratase (176 aa).

The active site involves His-75.

It belongs to the thioester dehydratase family. FabA subfamily. As to quaternary structure, homodimer.

The protein resides in the cytoplasm. It catalyses the reaction a (3R)-hydroxyacyl-[ACP] = a (2E)-enoyl-[ACP] + H2O. It carries out the reaction (3R)-hydroxydecanoyl-[ACP] = (2E)-decenoyl-[ACP] + H2O. The catalysed reaction is (2E)-decenoyl-[ACP] = (3Z)-decenoyl-[ACP]. The protein operates within lipid metabolism; fatty acid biosynthesis. Necessary for the introduction of cis unsaturation into fatty acids. Catalyzes the dehydration of (3R)-3-hydroxydecanoyl-ACP to E-(2)-decenoyl-ACP and then its isomerization to Z-(3)-decenoyl-ACP. Can catalyze the dehydratase reaction for beta-hydroxyacyl-ACPs with saturated chain lengths up to 16:0, being most active on intermediate chain length. This chain is 3-hydroxydecanoyl-[acyl-carrier-protein] dehydratase, found in Glaesserella parasuis serovar 5 (strain SH0165) (Haemophilus parasuis).